A 411-amino-acid polypeptide reads, in one-letter code: Small ribosomal subunit protein bS1c (411 aa).

The transit peptide at 1–41 (MASLAQQLAGGLRCPPLSNSNLSKPFSPKHTLKPRFSPIVS) directs the protein to the chloroplast. S1 motif domains are found at residues 96–166 (GSRV…LSLR), 184–248 (DVVV…MSNR), and 261–329 (GSVV…LSTK).

Belongs to the bacterial ribosomal protein bS1 family. In terms of assembly, component of the chloroplast small ribosomal subunit (SSU). Mature 70S chloroplast ribosomes of higher plants consist of a small (30S) and a large (50S) subunit. The 30S small subunit contains 1 molecule of ribosomal RNA (16S rRNA) and 24 different proteins. The 50S large subunit contains 3 rRNA molecules (23S, 5S and 4.5S rRNA) and 33 different proteins.

It localises to the plastid. Its subcellular location is the chloroplast. Its function is as follows. Component of the chloroplast ribosome (chloro-ribosome), a dedicated translation machinery responsible for the synthesis of chloroplast genome-encoded proteins, including proteins of the transcription and translation machinery and components of the photosynthetic apparatus. Actively engaged in the initiation complex formation via a strong mRNA-binding activity. Possesses a poly(A)-binding activity which might play a role as a control element in chloroplast mRNA translation. In Spinacia oleracea (Spinach), this protein is Small ribosomal subunit protein bS1c (RPS1).